Here is a 286-residue protein sequence, read N- to C-terminus: ATP synthase gamma chain (286 aa).

Belongs to the ATPase gamma chain family. In terms of assembly, F-type ATPases have 2 components, CF(1) - the catalytic core - and CF(0) - the membrane proton channel. CF(1) has five subunits: alpha(3), beta(3), gamma(1), delta(1), epsilon(1). CF(0) has three main subunits: a, b and c.

It is found in the cell inner membrane. Functionally, produces ATP from ADP in the presence of a proton gradient across the membrane. The gamma chain is believed to be important in regulating ATPase activity and the flow of protons through the CF(0) complex. This is ATP synthase gamma chain from Shewanella halifaxensis (strain HAW-EB4).